Reading from the N-terminus, the 103-residue chain is Co-chaperonin GroES (103 aa).

Belongs to the GroES chaperonin family. In terms of assembly, heptamer of 7 subunits arranged in a ring. Interacts with the chaperonin GroEL.

The protein resides in the cytoplasm. In terms of biological role, together with the chaperonin GroEL, plays an essential role in assisting protein folding. The GroEL-GroES system forms a nano-cage that allows encapsulation of the non-native substrate proteins and provides a physical environment optimized to promote and accelerate protein folding. GroES binds to the apical surface of the GroEL ring, thereby capping the opening of the GroEL channel. The sequence is that of Co-chaperonin GroES from Prochlorococcus marinus (strain MIT 9312).